Consider the following 89-residue polypeptide: Small ribosomal subunit protein uS15 (89 aa).

Belongs to the universal ribosomal protein uS15 family. As to quaternary structure, part of the 30S ribosomal subunit. Forms a bridge to the 50S subunit in the 70S ribosome, contacting the 23S rRNA.

Its function is as follows. One of the primary rRNA binding proteins, it binds directly to 16S rRNA where it helps nucleate assembly of the platform of the 30S subunit by binding and bridging several RNA helices of the 16S rRNA. In terms of biological role, forms an intersubunit bridge (bridge B4) with the 23S rRNA of the 50S subunit in the ribosome. The chain is Small ribosomal subunit protein uS15 from Mycobacteroides abscessus (strain ATCC 19977 / DSM 44196 / CCUG 20993 / CIP 104536 / JCM 13569 / NCTC 13031 / TMC 1543 / L948) (Mycobacterium abscessus).